The primary structure comprises 508 residues: UTP--glucose-1-phosphate uridylyltransferase (508 aa).

Ser2 bears the N-acetylserine mark. Ser2 and Ser13 each carry phosphoserine. Residues 113–116 (LNGG), Lys127, Gln190, and Gly222 contribute to the UTP site. A substrate-binding site is contributed by 115–116 (GG). Lys127 contributes to the Mg(2+) binding site. Residues His223, 251–253 (NID), and Asn330 contribute to the substrate site. Asp253 is a UTP binding site. Position 253 (Asp253) interacts with Mg(2+). Residue Lys396 participates in UTP binding. Lys396 is a catalytic residue. Phosphothreonine is present on Thr426. Ser434 is modified (phosphoserine). Residue Lys438 is modified to N6-acetyllysine. A phosphoserine mark is found at Ser448 and Ser461. Positions 457 to 508 (HLTVSGDVTFGKNVSLKGTVIIIANHGDRIDIPPGAVLENKIVSGNLRILDH) are oligomerization. The tract at residues 502–503 (NL) is critical for end-to-end subunit interaction.

Belongs to the UDPGP type 1 family. Homooctamer. In terms of tissue distribution, highly expressed in various brain regions. Expressed in amygdala, anterior cingulate cortex, caudate, cerebellar hemisphere, cerebellum, cortex, frontal cortex, hippocampus, hypothalamus, nucleus accumbens, putamen, spinal cord and substantia nigra. Also widely expressed among other tissues, including liver, heart, placenta, lung, kidney, pancreas and skeletal muscle.

The protein localises to the cytoplasm. The enzyme catalyses alpha-D-glucose 1-phosphate + UTP + H(+) = UDP-alpha-D-glucose + diphosphate. It participates in glycan biosynthesis; glycogen biosynthesis. In terms of biological role, UTP--glucose-1-phosphate uridylyltransferase catalyzing the conversion of glucose-1-phosphate into UDP-glucose, a crucial precursor for the production of glycogen. This Homo sapiens (Human) protein is UTP--glucose-1-phosphate uridylyltransferase.